A 420-amino-acid chain; its full sequence is Glucose-1-phosphate adenylyltransferase (420 aa).

Residues Tyr-107, Gly-172, 187–188 (EK), and Ser-205 each bind alpha-D-glucose 1-phosphate.

The protein belongs to the bacterial/plant glucose-1-phosphate adenylyltransferase family. Homotetramer.

The catalysed reaction is alpha-D-glucose 1-phosphate + ATP + H(+) = ADP-alpha-D-glucose + diphosphate. It participates in glycan biosynthesis; glycogen biosynthesis. In terms of biological role, involved in the biosynthesis of ADP-glucose, a building block required for the elongation reactions to produce glycogen. Catalyzes the reaction between ATP and alpha-D-glucose 1-phosphate (G1P) to produce pyrophosphate and ADP-Glc. In Rhizobium johnstonii (strain DSM 114642 / LMG 32736 / 3841) (Rhizobium leguminosarum bv. viciae), this protein is Glucose-1-phosphate adenylyltransferase.